A 112-amino-acid chain; its full sequence is Small ribosomal subunit protein bS16 (112 aa).

This sequence belongs to the bacterial ribosomal protein bS16 family.

The sequence is that of Small ribosomal subunit protein bS16 from Aquifex aeolicus (strain VF5).